We begin with the raw amino-acid sequence, 373 residues long: S-adenosylmethionine:tRNA ribosyltransferase-isomerase (373 aa).

Belongs to the QueA family. In terms of assembly, monomer.

It is found in the cytoplasm. The catalysed reaction is 7-aminomethyl-7-carbaguanosine(34) in tRNA + S-adenosyl-L-methionine = epoxyqueuosine(34) in tRNA + adenine + L-methionine + 2 H(+). It participates in tRNA modification; tRNA-queuosine biosynthesis. Functionally, transfers and isomerizes the ribose moiety from AdoMet to the 7-aminomethyl group of 7-deazaguanine (preQ1-tRNA) to give epoxyqueuosine (oQ-tRNA). This chain is S-adenosylmethionine:tRNA ribosyltransferase-isomerase, found in Caulobacter sp. (strain K31).